The chain runs to 397 residues: Formate-dependent phosphoribosylglycinamide formyltransferase (397 aa).

N(1)-(5-phospho-beta-D-ribosyl)glycinamide is bound by residues 21–22 (EL) and Glu81. ATP-binding positions include Arg113, Lys154, 194 to 197 (EEYV), and Glu202. Residues 118 to 313 (KLAAEKVKVP…EFQIHVRSAL (196 aa)) form the ATP-grasp domain. Glu272 and Glu284 together coordinate Mg(2+). N(1)-(5-phospho-beta-D-ribosyl)glycinamide contacts are provided by residues Asp291, Lys361, and 368–369 (RR).

It belongs to the PurK/PurT family. As to quaternary structure, homodimer.

It catalyses the reaction N(1)-(5-phospho-beta-D-ribosyl)glycinamide + formate + ATP = N(2)-formyl-N(1)-(5-phospho-beta-D-ribosyl)glycinamide + ADP + phosphate + H(+). It functions in the pathway purine metabolism; IMP biosynthesis via de novo pathway; N(2)-formyl-N(1)-(5-phospho-D-ribosyl)glycinamide from N(1)-(5-phospho-D-ribosyl)glycinamide (formate route): step 1/1. Functionally, involved in the de novo purine biosynthesis. Catalyzes the transfer of formate to 5-phospho-ribosyl-glycinamide (GAR), producing 5-phospho-ribosyl-N-formylglycinamide (FGAR). Formate is provided by PurU via hydrolysis of 10-formyl-tetrahydrofolate. In Sulfurisphaera tokodaii (strain DSM 16993 / JCM 10545 / NBRC 100140 / 7) (Sulfolobus tokodaii), this protein is Formate-dependent phosphoribosylglycinamide formyltransferase.